Consider the following 188-residue polypeptide: NADH-quinone oxidoreductase subunit B 1 (188 aa).

Residues Cys-39, Cys-40, Cys-105, and Cys-134 each coordinate [4Fe-4S] cluster.

This sequence belongs to the complex I 20 kDa subunit family. NDH-1 is composed of 14 different subunits. Subunits NuoB, C, D, E, F, and G constitute the peripheral sector of the complex. It depends on [4Fe-4S] cluster as a cofactor.

It localises to the cell inner membrane. The catalysed reaction is a quinone + NADH + 5 H(+)(in) = a quinol + NAD(+) + 4 H(+)(out). Functionally, NDH-1 shuttles electrons from NADH, via FMN and iron-sulfur (Fe-S) centers, to quinones in the respiratory chain. The immediate electron acceptor for the enzyme in this species is believed to be ubiquinone. Couples the redox reaction to proton translocation (for every two electrons transferred, four hydrogen ions are translocated across the cytoplasmic membrane), and thus conserves the redox energy in a proton gradient. The sequence is that of NADH-quinone oxidoreductase subunit B 1 from Solibacter usitatus (strain Ellin6076).